A 305-amino-acid polypeptide reads, in one-letter code: Ribosomal RNA small subunit methyltransferase H (305 aa).

S-adenosyl-L-methionine-binding positions include 47-49 (GGH), Asp66, Phe93, Asp108, and Gln115. The tract at residues 279 to 305 (ADSNEKLNNPRSRSAKLRLAKKRNPNE) is disordered. A compositionally biased stretch (basic residues) spans 291–305 (RSAKLRLAKKRNPNE).

The protein belongs to the methyltransferase superfamily. RsmH family.

The protein resides in the cytoplasm. The enzyme catalyses cytidine(1402) in 16S rRNA + S-adenosyl-L-methionine = N(4)-methylcytidine(1402) in 16S rRNA + S-adenosyl-L-homocysteine + H(+). Specifically methylates the N4 position of cytidine in position 1402 (C1402) of 16S rRNA. The protein is Ribosomal RNA small subunit methyltransferase H of Prochlorococcus marinus (strain SARG / CCMP1375 / SS120).